Reading from the N-terminus, the 300-residue chain is B3 domain-containing protein At5g57720 (300 aa).

The segment at residues 11-105 (PDFLKIFNSH…SFWVRIHRNG (95 aa)) is a DNA-binding region (TF-B3). Residues 115 to 142 (KIQEISDDEDETNGDGDPHMEEEGDTDE) form a disordered region. Residues 119–129 (ISDDEDETNGD) show a composition bias toward acidic residues.

The protein localises to the nucleus. The protein is B3 domain-containing protein At5g57720 of Arabidopsis thaliana (Mouse-ear cress).